The sequence spans 107 residues: Flagellar transcriptional regulator FlhD (107 aa).

The protein belongs to the FlhD family. Homodimer; disulfide-linked. Forms a heterohexamer composed of two FlhC and four FlhD subunits. Each FlhC binds a FlhD dimer, forming a heterotrimer, and a hexamer assembles by dimerization of two heterotrimers.

It localises to the cytoplasm. Its function is as follows. Functions in complex with FlhC as a master transcriptional regulator that regulates transcription of several flagellar and non-flagellar operons by binding to their promoter region. Activates expression of class 2 flagellar genes, including fliA, which is a flagellum-specific sigma factor that turns on the class 3 genes. Also regulates genes whose products function in a variety of physiological pathways. In Bordetella avium (strain 197N), this protein is Flagellar transcriptional regulator FlhD.